Reading from the N-terminus, the 173-residue chain is Small ribosomal subunit protein uS5 (173 aa).

The S5 DRBM domain maps to 18 to 81 (LREKMIAVNR…EQARRGMFKV (64 aa)).

Belongs to the universal ribosomal protein uS5 family. As to quaternary structure, part of the 30S ribosomal subunit. Contacts proteins S4 and S8.

Functionally, with S4 and S12 plays an important role in translational accuracy. Located at the back of the 30S subunit body where it stabilizes the conformation of the head with respect to the body. This chain is Small ribosomal subunit protein uS5, found in Bordetella petrii (strain ATCC BAA-461 / DSM 12804 / CCUG 43448).